Reading from the N-terminus, the 55-residue chain is Large ribosomal subunit protein bL33 (55 aa).

Belongs to the bacterial ribosomal protein bL33 family.

In Rhizobium meliloti (strain 1021) (Ensifer meliloti), this protein is Large ribosomal subunit protein bL33.